The following is a 173-amino-acid chain: NADH-ubiquinone oxidoreductase chain 6 (173 aa).

5 consecutive transmembrane segments (helical) span residues M1 to S21, F27 to G47, L53 to L73, S86 to W106, and Y139 to L159.

This sequence belongs to the complex I subunit 6 family.

The protein localises to the mitochondrion membrane. The catalysed reaction is a ubiquinone + NADH + 5 H(+)(in) = a ubiquinol + NAD(+) + 4 H(+)(out). Functionally, core subunit of the mitochondrial membrane respiratory chain NADH dehydrogenase (Complex I) that is believed to belong to the minimal assembly required for catalysis. Complex I functions in the transfer of electrons from NADH to the respiratory chain. The immediate electron acceptor for the enzyme is believed to be ubiquinone. This is NADH-ubiquinone oxidoreductase chain 6 (MT-ND6) from Salmo salar (Atlantic salmon).